The primary structure comprises 69 residues: Sec-independent protein translocase protein TatA (69 aa).

A helical membrane pass occupies residues 1–21; it reads MFGKLGMPELVLIFAVALVIF.

It belongs to the TatA/E family. As to quaternary structure, forms a complex with TatC.

The protein resides in the cell membrane. Functionally, part of the twin-arginine translocation (Tat) system that transports large folded proteins containing a characteristic twin-arginine motif in their signal peptide across membranes. TatA could form the protein-conducting channel of the Tat system. The polypeptide is Sec-independent protein translocase protein TatA (Alkaliphilus metalliredigens (strain QYMF)).